Here is a 277-residue protein sequence, read N- to C-terminus: Large ribosomal subunit protein uL2 (277 aa).

The disordered stretch occupies residues 199–277; that stretch reads DHMNTSIGKA…ILLSRHKRKK (79 aa). Residues 209 to 220 show a composition bias toward basic residues; the sequence is GRNRWLGRKPHN.

This sequence belongs to the universal ribosomal protein uL2 family. Part of the 50S ribosomal subunit. Forms a bridge to the 30S subunit in the 70S ribosome.

One of the primary rRNA binding proteins. Required for association of the 30S and 50S subunits to form the 70S ribosome, for tRNA binding and peptide bond formation. It has been suggested to have peptidyltransferase activity; this is somewhat controversial. Makes several contacts with the 16S rRNA in the 70S ribosome. In Bradyrhizobium diazoefficiens (strain JCM 10833 / BCRC 13528 / IAM 13628 / NBRC 14792 / USDA 110), this protein is Large ribosomal subunit protein uL2.